The chain runs to 279 residues: Shikimate dehydrogenase (NADP(+)) (279 aa).

Residues 16 to 18 and Thr-63 contribute to the shikimate site; that span reads SRS. Lys-67 acts as the Proton acceptor in catalysis. Asn-88 and Asp-103 together coordinate shikimate. NADP(+) contacts are provided by residues 128–132 and Met-219; that span reads GAGGA. Shikimate is bound at residue Tyr-221. Gly-243 is a binding site for NADP(+).

This sequence belongs to the shikimate dehydrogenase family. As to quaternary structure, homodimer.

It carries out the reaction shikimate + NADP(+) = 3-dehydroshikimate + NADPH + H(+). Its pathway is metabolic intermediate biosynthesis; chorismate biosynthesis; chorismate from D-erythrose 4-phosphate and phosphoenolpyruvate: step 4/7. Its function is as follows. Involved in the biosynthesis of the chorismate, which leads to the biosynthesis of aromatic amino acids. Catalyzes the reversible NADPH linked reduction of 3-dehydroshikimate (DHSA) to yield shikimate (SA). In Aromatoleum aromaticum (strain DSM 19018 / LMG 30748 / EbN1) (Azoarcus sp. (strain EbN1)), this protein is Shikimate dehydrogenase (NADP(+)).